A 1102-amino-acid polypeptide reads, in one-letter code: Carbamoyl phosphate synthase large chain (1102 aa).

The tract at residues 1–408 (MPKRSDIQSV…ALQKALRSLE (408 aa)) is carboxyphosphate synthetic domain. R129, R175, G181, G182, E214, I216, E221, G247, V248, H249, Q291, and E305 together coordinate ATP. The ATP-grasp 1 domain occupies 137-334 (EAVKEKIGYG…IAKIAAKLAV (198 aa)). Mg(2+)-binding residues include Q291, E305, and N307. Positions 291, 305, and 307 each coordinate Mn(2+). The oligomerization domain stretch occupies residues 409 to 551 (KKGSQFAFTG…YFYSSYDEES (143 aa)). Residues 552–954 (EVAPRTKPAV…AYAKSQAGAY (403 aa)) form a carbamoyl phosphate synthetic domain region. The 192-residue stretch at 682–873 (GRVLAEAGLP…LAKAAARISL (192 aa)) folds into the ATP-grasp 2 domain. ATP is bound by residues R718, R757, L759, E764, G789, I790, H791, S792, Q832, and E844. 3 residues coordinate Mg(2+): Q832, E844, and N846. Mn(2+) is bound by residues Q832, E844, and N846. Residues 955-1100 (GPLPTAGRAF…QEHAEHLTAA (146 aa)) form the MGS-like domain. Positions 955 to 1102 (GPLPTAGRAF…HAEHLTAARD (148 aa)) are allosteric domain.

Belongs to the CarB family. Composed of two chains; the small (or glutamine) chain promotes the hydrolysis of glutamine to ammonia, which is used by the large (or ammonia) chain to synthesize carbamoyl phosphate. Tetramer of heterodimers (alpha,beta)4. The cofactor is Mg(2+). It depends on Mn(2+) as a cofactor.

The catalysed reaction is hydrogencarbonate + L-glutamine + 2 ATP + H2O = carbamoyl phosphate + L-glutamate + 2 ADP + phosphate + 2 H(+). It catalyses the reaction hydrogencarbonate + NH4(+) + 2 ATP = carbamoyl phosphate + 2 ADP + phosphate + 2 H(+). It functions in the pathway amino-acid biosynthesis; L-arginine biosynthesis; carbamoyl phosphate from bicarbonate: step 1/1. The protein operates within pyrimidine metabolism; UMP biosynthesis via de novo pathway; (S)-dihydroorotate from bicarbonate: step 1/3. In terms of biological role, large subunit of the glutamine-dependent carbamoyl phosphate synthetase (CPSase). CPSase catalyzes the formation of carbamoyl phosphate from the ammonia moiety of glutamine, carbonate, and phosphate donated by ATP, constituting the first step of 2 biosynthetic pathways, one leading to arginine and/or urea and the other to pyrimidine nucleotides. The large subunit (synthetase) binds the substrates ammonia (free or transferred from glutamine from the small subunit), hydrogencarbonate and ATP and carries out an ATP-coupled ligase reaction, activating hydrogencarbonate by forming carboxy phosphate which reacts with ammonia to form carbamoyl phosphate. The polypeptide is Carbamoyl phosphate synthase large chain (Streptomyces griseus subsp. griseus (strain JCM 4626 / CBS 651.72 / NBRC 13350 / KCC S-0626 / ISP 5235)).